Here is a 528-residue protein sequence, read N- to C-terminus: Sulfhydryl oxidase 1 (528 aa).

Positions 1–19 (MSLIHLFLLLGLLSLEAAA) are cleaved as a signal peptide. In terms of domain architecture, Thioredoxin spans 35-170 (NVADQKDNAI…LLNWINKQIG (136 aa)). N-linked (GlcNAc...) asparagine glycosylation occurs at N47. Residues C72 and C75 each act as nucleophile in the active site. Cysteines 72 and 75 form a disulfide. 2 N-linked (GlcNAc...) asparagine glycosylation sites follow: N186 and N297. C292 and C304 form a disulfide bridge. The ERV/ALR sulfhydryl oxidase domain maps to 295–397 (SKNETRGFSC…GDPKFPKMIW (103 aa)). Residues R300, W307, H311, D341, H345, 368–375 (WSTHNKVN), K394, and W397 each bind FAD. Cysteines 339 and 342 form a disulfide. A disulfide bond links C403 and C406.

The cofactor is FAD. As to expression, highly expressed in roots.

The protein localises to the secreted. Its subcellular location is the cell wall. It catalyses the reaction 2 R'C(R)SH + O2 = R'C(R)S-S(R)CR' + H2O2. Functionally, sulfhydryl oxidase involved in the regulation of cation homeostasis. Positively regulates shoot accumulation of K(+) and inhibits accumulation of toxic cations. Acts at the level of root K(+) efflux systems involved in xylem loading (root symplast-xylem interface). The protein is Sulfhydryl oxidase 1 (QSOX1) of Arabidopsis thaliana (Mouse-ear cress).